We begin with the raw amino-acid sequence, 98 residues long: SPbeta prophage-derived uncharacterized protein YorB (98 aa).

This is SPbeta prophage-derived uncharacterized protein YorB (yorB) from Bacillus subtilis (strain 168).